The chain runs to 265 residues: Zinc import ATP-binding protein ZnuC (265 aa).

The ABC transporter domain maps to 6–221; it reads IRLEQVAVTL…PAFVELFGKN (216 aa). Position 38–45 (38–45) interacts with ATP; sequence GPNGAGKT. The tract at residues 245–265 is disordered; it reads DAPATSSHTHTHVHGDHCKHG.

The protein belongs to the ABC transporter superfamily. Zinc importer (TC 3.A.1.15.5) family. The complex is composed of two ATP-binding proteins (ZnuC), two transmembrane proteins (ZnuB) and a solute-binding protein (ZnuA).

The protein resides in the cell inner membrane. It catalyses the reaction Zn(2+)(out) + ATP(in) + H2O(in) = Zn(2+)(in) + ADP(in) + phosphate(in) + H(+)(in). In terms of biological role, part of the ABC transporter complex ZnuABC involved in zinc import. Responsible for energy coupling to the transport system. This chain is Zinc import ATP-binding protein ZnuC, found in Pseudomonas savastanoi pv. phaseolicola (strain 1448A / Race 6) (Pseudomonas syringae pv. phaseolicola (strain 1448A / Race 6)).